A 64-amino-acid polypeptide reads, in one-letter code: Tracheal antimicrobial peptide (64 aa).

The first 26 residues, 1-26 (MRLHHLLLALLFLVLSAWSGFTQGVG), serve as a signal peptide directing secretion. 3 disulfide bridges follow: cysteine 31-cysteine 60, cysteine 38-cysteine 53, and cysteine 43-cysteine 61.

This sequence belongs to the beta-defensin family. LAP/TAP subfamily. As to expression, tracheal epithelium.

It localises to the secreted. Has antibacterial activity in vitro against Escherichia coli, Staphylococcus aureus, Klebsiella pneumonia, and Pseudomonas aeruginosa. In addition, the peptide is active against Candida albicans, indicating a broad spectrum of activity. The chain is Tracheal antimicrobial peptide from Bos taurus (Bovine).